The chain runs to 143 residues: Large ribosomal subunit protein uL13 (143 aa).

It belongs to the universal ribosomal protein uL13 family. In terms of assembly, part of the 50S ribosomal subunit.

This protein is one of the early assembly proteins of the 50S ribosomal subunit, although it is not seen to bind rRNA by itself. It is important during the early stages of 50S assembly. The polypeptide is Large ribosomal subunit protein uL13 (Neisseria meningitidis serogroup C (strain 053442)).